The primary structure comprises 102 residues: NADH-quinone oxidoreductase subunit K (102 aa).

3 helical membrane passes run 6–26 (LTGFMILAAGLFAAGVFGVLA), 30–50 (ILFQLIALEVALSGPALAFIA), and 63–83 (MFVLTLTLAAAEVAVGLALFL).

It belongs to the complex I subunit 4L family. NDH-1 is composed of 14 different subunits. Subunits NuoA, H, J, K, L, M, N constitute the membrane sector of the complex.

Its subcellular location is the cell inner membrane. It carries out the reaction a quinone + NADH + 5 H(+)(in) = a quinol + NAD(+) + 4 H(+)(out). NDH-1 shuttles electrons from NADH, via FMN and iron-sulfur (Fe-S) centers, to quinones in the respiratory chain. The immediate electron acceptor for the enzyme in this species is believed to be ubiquinone. Couples the redox reaction to proton translocation (for every two electrons transferred, four hydrogen ions are translocated across the cytoplasmic membrane), and thus conserves the redox energy in a proton gradient. In Rhodopseudomonas palustris (strain BisA53), this protein is NADH-quinone oxidoreductase subunit K.